The chain runs to 409 residues: Putative competence-damage inducible protein (409 aa).

Belongs to the CinA family.

This chain is Putative competence-damage inducible protein, found in Clostridium botulinum (strain Okra / Type B1).